The chain runs to 55 residues: Myrmicitoxin(1)-Pr6b (55 aa).

The first 22 residues, 1-22 (MKIIYAFLLIAVVAFMGSGIMA), serve as a signal peptide directing secretion. The propeptide occupies 23–29 (ESLAEAI).

It belongs to the formicidae venom clade 4 family. As to expression, expressed by the venom gland.

It localises to the secreted. Probable neurotoxin. The chain is Myrmicitoxin(1)-Pr6b from Pogonomyrmex rugosus (Desert harvester ant).